Reading from the N-terminus, the 431-residue chain is Enolase (431 aa).

Residue Q162 coordinates (2R)-2-phosphoglycerate. E204 (proton donor) is an active-site residue. Residues D241, E284, and D311 each contribute to the Mg(2+) site. (2R)-2-phosphoglycerate-binding residues include K336, R365, S366, and K387. The Proton acceptor role is filled by K336.

This sequence belongs to the enolase family. Mg(2+) serves as cofactor.

It localises to the cytoplasm. Its subcellular location is the secreted. The protein resides in the cell surface. The catalysed reaction is (2R)-2-phosphoglycerate = phosphoenolpyruvate + H2O. It participates in carbohydrate degradation; glycolysis; pyruvate from D-glyceraldehyde 3-phosphate: step 4/5. Catalyzes the reversible conversion of 2-phosphoglycerate (2-PG) into phosphoenolpyruvate (PEP). It is essential for the degradation of carbohydrates via glycolysis. This Sorangium cellulosum (strain So ce56) (Polyangium cellulosum (strain So ce56)) protein is Enolase.